Consider the following 372-residue polypeptide: Oxidoreductase ptaL (372 aa).

An N-terminal signal peptide occupies residues 1–16; sequence MKHIVIIGGGFAGVST. 6-hydroxy-FAD contacts are provided by residues 8-12 and arginine 51; that span reads GGGFA. Asparagine 251 carries N-linked (GlcNAc...) asparagine glycosylation. Aspartate 285 is a binding site for 6-hydroxy-FAD.

It belongs to the FAD-dependent oxidoreductase family. 6-hydroxy-FAD is required as a cofactor.

It functions in the pathway secondary metabolite biosynthesis. In terms of biological role, oxidoreductase; part of the gene cluster that mediates the biosynthesis of pestheic acid, a diphenyl ether which is a biosynthetic precursor of the unique chloropupukeananes. The biosynthesis initiates from condensation of acetate and malonate units catalyzed by the non-reducing PKS ptaA. As the ptaA protein is TE/CLC domain-deficient, hydrolysis and Claisen cyclization of the polyketide could be catalyzed by ptaB containing a beta-lactamase domain. The ptaB protein might hydrolyze the thioester bond between the ACP of ptaA and the intermediate to release atrochrysone carboxylic acid, which is spontaneously dehydrated to form endocrocin anthrone. Endocrocin anthrone is then converted to endocrocin, catalyzed by the anthrone oxygenase ptaC. Spontaneous decarboxylation of endocrocin occurs to generate emodin. An O-methyltransferase (ptaH or ptaI) could methylate emodin to form physcion. PtaJ could then catalyze the oxidative cleavage of physcion, and rotation of the intermediate could then afford desmethylisosulochrin. PtaF, a putative NADH-dependent oxidoreductase, might also participate in the oxidative cleavage step. Desmethylisosulochrin is then transformed by another O-methyltransferase (ptaH or ptaI) to form isosulochrin. Chlorination of isosulochrin by ptaM in the cyclohexadienone B ring then produces chloroisosulochrin. PtaE is responsible for the oxidative coupling reactions of both benzophenones isosulochrin and chloroisosulochrin to RES-1214-1 and pestheic acid respectively, regardless of chlorination. The protein is Oxidoreductase ptaL of Pestalotiopsis fici (strain W106-1 / CGMCC3.15140).